We begin with the raw amino-acid sequence, 1059 residues long: Translation initiation factor IF-2 (1059 aa).

Composition is skewed to polar residues over residues 55-75 (LPHS…NQDS) and 107-126 (KINN…NNQV). Disordered regions lie at residues 55 to 81 (LPHS…GYNE), 93 to 394 (PKPL…RLRL), and 418 to 468 (SLSL…QSAE). The segment covering 178 to 187 (DSNEKSKVEV) has biased composition (basic and acidic residues). Residues 202-211 (LNRNLRNTGV) show a composition bias toward polar residues. Residues 216–229 (QKNKKPKQEGKKRK) are compositionally biased toward basic residues. 2 stretches are compositionally biased toward basic and acidic residues: residues 230–252 (DKEE…DTSI) and 259–273 (SKKE…RESV). Polar residues predominate over residues 274–284 (KTSASDTSSQL). Basic and acidic residues-rich tracts occupy residues 291–300 (KPTVKLKQEQ) and 359–368 (LTKDKKVSKW). A compositionally biased stretch (low complexity) spans 452-463 (SHESVQSESNEQ). One can recognise a tr-type G domain in the interval 556 to 733 (RRPPVVTIMG…EVEDLQANPE (178 aa)). A G1 region spans residues 565-572 (GHVDHGKT). 565 to 572 (GHVDHGKT) provides a ligand contact to GTP. The interval 590–594 (GITQH) is G2. The tract at residues 615–618 (DTPG) is G3. Residues 615-619 (DTPGH) and 669-672 (NKID) contribute to the GTP site. A G4 region spans residues 669 to 672 (NKID). The segment at 705–707 (SAI) is G5.

Belongs to the TRAFAC class translation factor GTPase superfamily. Classic translation factor GTPase family. IF-2 subfamily.

The protein resides in the cytoplasm. Its function is as follows. One of the essential components for the initiation of protein synthesis. Protects formylmethionyl-tRNA from spontaneous hydrolysis and promotes its binding to the 30S ribosomal subunits. Also involved in the hydrolysis of GTP during the formation of the 70S ribosomal complex. This chain is Translation initiation factor IF-2, found in Trichodesmium erythraeum (strain IMS101).